Consider the following 663-residue polypeptide: Polyunsaturated fatty acid lipoxygenase ALOX15 (663 aa).

Residues 2-115 (GLYRVRVSTG…ILSLPEGTAR (114 aa)) enclose the PLAT domain. Residues 116-663 (TVVDDPQGLF…PSRVENSVAI (548 aa)) form the Lipoxygenase domain. The Fe cation site is built by H361, H366, H541, H545, and I663.

It belongs to the lipoxygenase family. Interacts with PEBP1; in response to IL13/interleukin-13, prevents the interaction of PEBP1 with RAF1 to activate the ERK signaling cascade. It depends on Fe cation as a cofactor.

The protein resides in the cytoplasm. It localises to the cytosol. It is found in the cell membrane. Its subcellular location is the lipid droplet. The catalysed reaction is (5Z,8Z,11Z,14Z)-eicosatetraenoate + O2 = (12S)-hydroperoxy-(5Z,8Z,10E,14Z)-eicosatetraenoate. The enzyme catalyses (5Z,8Z,11Z,14Z)-eicosatetraenoate + O2 = (15S)-hydroperoxy-(5Z,8Z,11Z,13E)-eicosatetraenoate. It catalyses the reaction (9Z,12Z)-octadecadienoate + O2 = (13S)-hydroperoxy-(9Z,11E)-octadecadienoate. It carries out the reaction (5Z,8Z,11Z,14Z)-eicosatetraenoate + 2 O2 = (14R,15S)-dihydroperoxy-(5Z,8Z,10E,12E)-eicosatetraenoate. The catalysed reaction is (5Z,8Z,11Z,14Z)-eicosatetraenoate + 2 O2 = (8S,15S)-dihydroperoxy-(5Z,9E,11Z,13E)-eicosatetraenoate. The enzyme catalyses (14S,15R)-epoxy-(5Z,8Z,11Z)-eicosatrienoate + O2 = (8S)-hydroperoxy-(14S,15R)-epoxy-(5Z,9E,11Z)-eicosatrienoate. It catalyses the reaction (14S,15R)-epoxy-(5Z,8Z,11Z)-eicosatrienoate + O2 = (12S)-hydroperoxy-(14S,15R)-epoxy-(5Z,8Z,10E)-eicosatrienoate. It carries out the reaction (14R,15S)-epoxy-(5Z,8Z,11Z)-eicosatrienoate + O2 = (5S)-hydroperoxy-(14R,15S)-epoxy-(6E,8Z,11Z)-eicosatrienoate. The catalysed reaction is (14R,15S)-epoxy-(5Z,8Z,11Z)-eicosatrienoate + O2 = (12S)-hydroperoxy-(14R,15S)-epoxy-(5Z,8Z,10E)-eicosatrienoate. The enzyme catalyses (15R)-hydroperoxy-(5Z,8Z,11Z,13E)-eicosatetraenoate = 15-oxo-(5Z,8Z,11Z,13E)-eicosatetraenoate + H2O. It catalyses the reaction (15S)-hydroperoxy-(5Z,8Z,11Z,13E)-eicosatetraenoate = (14S,15S)-epoxy-(5Z,8Z,10E,12E)-eicosatetraenoate + H2O. It carries out the reaction (12S)-hydroperoxy-(5Z,8Z,10E,14Z)-eicosatetraenoate = (8S)-hydroxy-(11S,12S)-epoxy-(5Z,9E,14Z)-eicosatrienoate. The catalysed reaction is (4Z,7Z,10Z,13Z,16Z,19Z)-docosahexaenoate + O2 = 14-hydroperoxy-(4Z,7Z,10Z,12E,16Z,19Z)-docosahexaenoate. The enzyme catalyses (4Z,7Z,10Z,13Z,16Z)-docosapentaenoate + O2 = 14-hydroperoxy-(4Z,7Z,10Z,12E,16Z)-docosapentaenoate. It catalyses the reaction (7Z,10Z,13Z,16Z,19Z)-docosapentaenoate + O2 = 14-hydroperoxy-(7Z,10Z,12E,16Z,19Z)-docosapentaenoate. It carries out the reaction (4Z,7Z,10Z,13Z,16Z,19Z)-docosahexaenoate + O2 = (14S)-hydroperoxy-(4Z,7Z,10Z,12E,16Z,19Z)-docosahexaenoate. The catalysed reaction is (4Z,7Z,10Z,13Z,16Z,19Z)-docosahexaenoate + O2 = (17S)-hydroperoxy-(4Z,7Z,10Z,13Z,15E,19Z)-docosahexaenoate. The enzyme catalyses (7S)-hydroperoxy-(4Z,8E,10Z,13Z,16Z,19Z)-docosahexaenoate + O2 = (7S,14S)-dihydroperoxy-(4Z,8E,10Z,12E,16Z,19Z)-docosahexaenoate. It catalyses the reaction (7S)-hydroperoxy-(4Z,8E,10Z,13Z,16Z,19Z)-docosahexaenoate + O2 = (7S,17S)-dihydroperoxy-(4Z,8E,10Z,13Z,15E,19Z)-docosahexaenoate. It carries out the reaction (4Z,7Z,10Z,13Z,16Z,19Z)-docosahexaenoate + O2 = (11S)-hydroperoxy-(4Z,7Z,9E,13Z,16Z,19Z)-docosahexaenoate. The catalysed reaction is N-(5Z,8Z,11Z,14Z)-eicosatetraenoyl-taurine + O2 = N-(12S)-hydroperoxy-(5Z,8Z,10E,14Z)-eicosatetraenoyl-taurine. The enzyme catalyses N-(5Z,8Z,11Z,14Z)-eicosatetraenoyl-gamma-aminobutanoate + O2 = N-(12S)-hydroperoxy-(5Z,8Z,10E,14Z)-eicosatetraenoyl-gamma-aminobutanoate. It catalyses the reaction N-(5Z,8Z,11Z,14Z)-eicosatetraenoyl-glycine + O2 = N-(12S)-hydroperoxy-(5Z,8Z,10E,14Z)-eicosatetraenoyl-glycine. It carries out the reaction N-(5Z,8Z,11Z,14Z)-eicosatetraenoyl-L-alanine + O2 = N-(12S)-hydroperoxy-(5Z,8Z,10E,14Z)-eicosatetraenoyl-alanine. The catalysed reaction is N-(5Z,8Z,11Z,14Z)-eicosatetraenoyl-taurine + O2 = N-(15S)-hydroperoxy-(5Z,8Z,11Z,13E)-eicosatetraenoyl-taurine. The enzyme catalyses N-(5Z,8Z,11Z,14Z)-eicosatetraenoyl-gamma-aminobutanoate + O2 = N-(15S)-hydroperoxy-(5Z,8Z,11Z,13E)-eicosatetraenoyl-gamma-aminobutanoate. It catalyses the reaction N-(5Z,8Z,11Z,14Z)-eicosatetraenoyl-glycine + O2 = N-(15S)-hydroperoxy-(5Z,8Z,11Z,13E)-eicosatetraenoyl-glycine. It carries out the reaction N-(5Z,8Z,11Z,14Z)-eicosatetraenoyl-L-alanine + O2 = N-(15S)-hydroperoxy-(5Z,8Z,11Z,13E)-eicosatetraenoyl-alanine. It participates in lipid metabolism; hydroperoxy eicosatetraenoic acid biosynthesis. In terms of biological role, non-heme iron-containing dioxygenase that catalyzes the stereo-specific peroxidation of free and esterified polyunsaturated fatty acids generating a spectrum of bioactive lipid mediators. It inserts peroxyl groups at C12 or C15 of arachidonate ((5Z,8Z,11Z,14Z)-eicosatetraenoate) producing both 12-hydroperoxyeicosatetraenoate/12-HPETE and 15-hydroperoxyeicosatetraenoate/15-HPETE. It may then act on 12-HPETE to produce hepoxilins, which may show pro-inflammatory properties. Can also peroxidize linoleate ((9Z,12Z)-octadecadienoate) to 13-hydroperoxyoctadecadienoate. May participate in the sequential oxidations of DHA ((4Z,7Z,10Z,13Z,16Z,19Z)-docosahexaenoate) to generate specialized pro-resolving mediators (SPMs)like resolvin D5 ((7S,17S)-diHPDHA) and (7S,14S)-diHPDHA, that actively down-regulate the immune response and have anti-aggregation properties with platelets. Can convert epoxy fatty acids to hydroperoxy-epoxides derivatives followed by an intramolecular nucleophilic substitution leading to the formation of monocyclic endoperoxides. Plays an important role during the maintenance of self-tolerance by peroxidizing membrane-bound phosphatidylethanolamine which can then signal the sorting process for clearance of apoptotic cells during inflammation and prevent an autoimmune response. In addition to its role in the immune and inflammatory responses, this enzyme may play a role in epithelial wound healing in the cornea through production of lipoxin A4 (LXA(4)) and docosahexaenoic acid-derived neuroprotectin D1 (NPD1; 10R,17S-HDHA), both lipid autacoids exhibit anti-inflammatory and neuroprotective properties. Furthermore, it may regulate actin polymerization which is crucial for several biological processes such as the phagocytosis of apoptotic cells. It is also implicated in the generation of endogenous ligands for peroxisome proliferator activated receptor (PPAR-gamma), hence modulating macrophage development and function. It may also exert a negative effect on skeletal development by regulating bone mass through this pathway. As well as participates in ER stress and downstream inflammation in adipocytes, pancreatic islets, and liver. Finally, it is also involved in the cellular response to IL13/interleukin-13. The chain is Polyunsaturated fatty acid lipoxygenase ALOX15 from Sus scrofa (Pig).